The chain runs to 291 residues: 3-methyl-2-oxobutanoate hydroxymethyltransferase (291 aa).

Positions 1 to 10 (MTQLSAAQTP) are enriched in polar residues. A disordered region spans residues 1-20 (MTQLSAAQTPQPKPADGNRA). Residues D71 and D110 each coordinate Mg(2+). 3-methyl-2-oxobutanoate is bound by residues 71–72 (DS), D110, and K140. A Mg(2+)-binding site is contributed by E142. Catalysis depends on E208, which acts as the Proton acceptor.

It belongs to the PanB family. Homodecamer; pentamer of dimers. Mg(2+) serves as cofactor.

It localises to the cytoplasm. It catalyses the reaction 3-methyl-2-oxobutanoate + (6R)-5,10-methylene-5,6,7,8-tetrahydrofolate + H2O = 2-dehydropantoate + (6S)-5,6,7,8-tetrahydrofolate. It functions in the pathway cofactor biosynthesis; (R)-pantothenate biosynthesis; (R)-pantoate from 3-methyl-2-oxobutanoate: step 1/2. Functionally, catalyzes the reversible reaction in which hydroxymethyl group from 5,10-methylenetetrahydrofolate is transferred onto alpha-ketoisovalerate to form ketopantoate. This Streptomyces coelicolor (strain ATCC BAA-471 / A3(2) / M145) protein is 3-methyl-2-oxobutanoate hydroxymethyltransferase.